Here is a 334-residue protein sequence, read N- to C-terminus: Holliday junction branch migration complex subunit RuvB (334 aa).

The segment at 1-180 (MSEFLTPERT…FGIILELDFY (180 aa)) is large ATPase domain (RuvB-L). ATP is bound by residues leucine 19, arginine 20, glycine 61, lysine 64, threonine 65, threonine 66, 127–129 (EDF), arginine 170, tyrosine 180, and arginine 217. Threonine 65 contacts Mg(2+). The interval 181-251 (TVKELKEIIK…IVLKTMEVLN (71 aa)) is small ATPAse domain (RuvB-S). Residues 254–334 (AEGLDEFDRK…KYEVPENRLF (81 aa)) form a head domain (RuvB-H) region. 2 residues coordinate DNA: arginine 309 and arginine 314.

The protein belongs to the RuvB family. Homohexamer. Forms an RuvA(8)-RuvB(12)-Holliday junction (HJ) complex. HJ DNA is sandwiched between 2 RuvA tetramers; dsDNA enters through RuvA and exits via RuvB. An RuvB hexamer assembles on each DNA strand where it exits the tetramer. Each RuvB hexamer is contacted by two RuvA subunits (via domain III) on 2 adjacent RuvB subunits; this complex drives branch migration. In the full resolvosome a probable DNA-RuvA(4)-RuvB(12)-RuvC(2) complex forms which resolves the HJ.

It is found in the cytoplasm. The catalysed reaction is ATP + H2O = ADP + phosphate + H(+). Its function is as follows. The RuvA-RuvB-RuvC complex processes Holliday junction (HJ) DNA during genetic recombination and DNA repair, while the RuvA-RuvB complex plays an important role in the rescue of blocked DNA replication forks via replication fork reversal (RFR). RuvA specifically binds to HJ cruciform DNA, conferring on it an open structure. The RuvB hexamer acts as an ATP-dependent pump, pulling dsDNA into and through the RuvAB complex. RuvB forms 2 homohexamers on either side of HJ DNA bound by 1 or 2 RuvA tetramers; 4 subunits per hexamer contact DNA at a time. Coordinated motions by a converter formed by DNA-disengaged RuvB subunits stimulates ATP hydrolysis and nucleotide exchange. Immobilization of the converter enables RuvB to convert the ATP-contained energy into a lever motion, pulling 2 nucleotides of DNA out of the RuvA tetramer per ATP hydrolyzed, thus driving DNA branch migration. The RuvB motors rotate together with the DNA substrate, which together with the progressing nucleotide cycle form the mechanistic basis for DNA recombination by continuous HJ branch migration. Branch migration allows RuvC to scan DNA until it finds its consensus sequence, where it cleaves and resolves cruciform DNA. The chain is Holliday junction branch migration complex subunit RuvB from Thermotoga petrophila (strain ATCC BAA-488 / DSM 13995 / JCM 10881 / RKU-1).